The primary structure comprises 473 residues: N-lysine methyltransferase SETD6 (473 aa).

Lys39 carries the N6-methylated lysine; by autocatalysis modification. Residues 60 to 286 (PPAQVAVSRQ…KGHEIFNTYG (227 aa)) form the SET domain. Residue 73-75 (AGY) coordinates S-adenosyl-L-methionine. Residue Trp122 participates in substrate binding. Lys179 is modified (N6-methylated lysine; by autocatalysis). Position 223 (Tyr223) interacts with S-adenosyl-L-methionine. 2 residues coordinate substrate: Ser224 and Gln226. Residue 251–252 (NH) participates in S-adenosyl-L-methionine binding. Tyr262 and Tyr297 together coordinate substrate. Tyr297 provides a ligand contact to S-adenosyl-L-methionine. Position 372 is an N6-methylated lysine; by autocatalysis (Lys372).

It belongs to the class V-like SAM-binding methyltransferase superfamily. Histone-lysine methyltransferase family. SETD6 subfamily. As to quaternary structure, monomer, homodimer and homotrimer; these structures are stabilized in the presence of S-adenosyl-L-methionine (SAM). Automethylated; Lys-39 and Lys-179 serve as the major automethylation sites.

It localises to the nucleus. The catalysed reaction is L-lysyl-[protein] + S-adenosyl-L-methionine = N(6)-methyl-L-lysyl-[protein] + S-adenosyl-L-homocysteine + H(+). The enzyme catalyses L-lysyl(8)-[histone H2AZ] + S-adenosyl-L-methionine = N(6)-methyl-L-lysyl(8)-[histone H2AZ] + S-adenosyl-L-homocysteine + H(+). Its activity is regulated as follows. Activated by automethylation. Functionally, protein-lysine N-methyltransferase. Monomethylates 'Lys-310' of the RELA subunit of NF-kappa-B complex, leading to down-regulation of NF-kappa-B transcription factor activity. Monomethylates 'Lys-8' of H2AZ (H2AZK8me1). Required for the maintenance of embryonic stem cell self-renewal. Methylates PAK4. This chain is N-lysine methyltransferase SETD6, found in Homo sapiens (Human).